A 95-amino-acid polypeptide reads, in one-letter code: ATP-dependent Clp protease adapter protein ClpS (95 aa).

The protein belongs to the ClpS family. In terms of assembly, binds to the N-terminal domain of the chaperone ClpA.

Involved in the modulation of the specificity of the ClpAP-mediated ATP-dependent protein degradation. The polypeptide is ATP-dependent Clp protease adapter protein ClpS (Synechococcus elongatus (strain ATCC 33912 / PCC 7942 / FACHB-805) (Anacystis nidulans R2)).